The sequence spans 103 residues: ISTSKLCVSYTIWKVGDYDASLGTMLLETGGTIGQADSSWFKIVQSSQFGYNLLYCPVTSTMSCPFSLDDQFCLKVGVVHQNGKRRLALVNGNPLECLFKQVQ.

Cysteines 56 and 73 form a disulfide.

The protein belongs to the protease inhibitor I3 (leguminous Kunitz-type inhibitor) family.

Its subcellular location is the vacuole. Functionally, inhibitor of serine protease. May protect the plant by inhibiting proteases of invading organisms. The protein is Serine protease inhibitor 4 of Solanum tuberosum (Potato).